Reading from the N-terminus, the 143-residue chain is Large ribosomal subunit protein uL15 (143 aa).

Residues 1-52 form a disordered region; the sequence is MKLNTLAPAAGSKSAPKRLGRGIGSGLGKTSGKGHKGQKARSGGYHKVGFEG. A compositionally biased stretch (gly residues) spans 21 to 31; that stretch reads RGIGSGLGKTS.

Belongs to the universal ribosomal protein uL15 family. In terms of assembly, part of the 50S ribosomal subunit.

Its function is as follows. Binds to the 23S rRNA. The polypeptide is Large ribosomal subunit protein uL15 (Francisella tularensis subsp. novicida (strain U112)).